Consider the following 417-residue polypeptide: Serine hydroxymethyltransferase (417 aa).

(6S)-5,6,7,8-tetrahydrofolate-binding positions include Leu-122 and 126–128; that span reads GHL. An N6-(pyridoxal phosphate)lysine modification is found at Lys-230. Residue 355 to 357 coordinates (6S)-5,6,7,8-tetrahydrofolate; sequence SPF.

The protein belongs to the SHMT family. Homodimer. Requires pyridoxal 5'-phosphate as cofactor.

It localises to the cytoplasm. It catalyses the reaction (6R)-5,10-methylene-5,6,7,8-tetrahydrofolate + glycine + H2O = (6S)-5,6,7,8-tetrahydrofolate + L-serine. Its pathway is one-carbon metabolism; tetrahydrofolate interconversion. It functions in the pathway amino-acid biosynthesis; glycine biosynthesis; glycine from L-serine: step 1/1. Catalyzes the reversible interconversion of serine and glycine with tetrahydrofolate (THF) serving as the one-carbon carrier. This reaction serves as the major source of one-carbon groups required for the biosynthesis of purines, thymidylate, methionine, and other important biomolecules. Also exhibits THF-independent aldolase activity toward beta-hydroxyamino acids, producing glycine and aldehydes, via a retro-aldol mechanism. In Francisella tularensis subsp. mediasiatica (strain FSC147), this protein is Serine hydroxymethyltransferase.